Reading from the N-terminus, the 156-residue chain is S-ribosylhomocysteine lyase (156 aa).

3 residues coordinate Fe cation: His-56, His-60, and Cys-123.

This sequence belongs to the LuxS family. In terms of assembly, homodimer. Requires Fe cation as cofactor.

It carries out the reaction S-(5-deoxy-D-ribos-5-yl)-L-homocysteine = (S)-4,5-dihydroxypentane-2,3-dione + L-homocysteine. Functionally, involved in the synthesis of autoinducer 2 (AI-2) which is secreted by bacteria and is used to communicate both the cell density and the metabolic potential of the environment. The regulation of gene expression in response to changes in cell density is called quorum sensing. Catalyzes the transformation of S-ribosylhomocysteine (RHC) to homocysteine (HC) and 4,5-dihydroxy-2,3-pentadione (DPD). The chain is S-ribosylhomocysteine lyase from Staphylococcus aureus (strain Mu3 / ATCC 700698).